Consider the following 115-residue polypeptide: Nucleoid-associated protein tlr0723 (115 aa).

This sequence belongs to the YbaB/EbfC family. As to quaternary structure, homodimer.

The protein resides in the cytoplasm. It localises to the nucleoid. Binds to DNA and alters its conformation. May be involved in regulation of gene expression, nucleoid organization and DNA protection. This Thermosynechococcus vestitus (strain NIES-2133 / IAM M-273 / BP-1) protein is Nucleoid-associated protein tlr0723.